Reading from the N-terminus, the 126-residue chain is Glycine cleavage system H protein (126 aa).

Residues 22 to 104 enclose the Lipoyl-binding domain; it reads IATVGITAFA…YGRGWLFKVE (83 aa). K63 carries the post-translational modification N6-lipoyllysine.

The protein belongs to the GcvH family. In terms of assembly, the glycine cleavage system is composed of four proteins: P, T, L and H. It depends on (R)-lipoate as a cofactor.

In terms of biological role, the glycine cleavage system catalyzes the degradation of glycine. The H protein shuttles the methylamine group of glycine from the P protein to the T protein. The sequence is that of Glycine cleavage system H protein from Thermobifida fusca (strain YX).